The following is a 655-amino-acid chain: MGIFSIANQHIRFAVKLATAIVLALFVGFHFQLETPRWAVLTAAIVAAGPAFAAGGEPYSGAIRYRGFLRIIGTFIGCIAGLVIIIAMIRAPLLMILVCCIWAGFCTWISSLVRIENSYAWGLAGYTALIIVITIQPEPLLTPQFAVERCSEIVIGIVCAIMADLLFSPRSIKQEVDRELESLLVAQYQLMQLCIKHGDGEVVDKAWGDLVRRTTALQGMRSNLNMESSRWARANRRLKAINTLSLTLITQSCETYLIQNTRPELITDTFREFFDTPVETAQDVHKQLKRLRRVIAWTGERETPVTIYSWVAAATRYQLLKRGVISNTKINATEEEILQGEPEVKVESAERHHAMVNFWRTTLSCILGTLFWLWTGWTSGSGAMVMIAVVTSLAMRLPNPRMVAIDFIYGTLAALPLGLLYFLVIIPNTQQSMLLLCISLAVLGFFLGIEVQKRRLGSMGALASTINIIVLDNPMTFHFSQFLDSALGQIVGCVLAFTVILLVRDKSRDRTGRVLLNQFVSAAVSAMTTNVARRKENHLPALYQQLFLLMNKFPGDLPKFRLALTMIIAHQRLRDAPIPVNEDLSAFHRQMRRTADHVISARSDDKRRRYFGQLLEELKIYQEKLRIWQAPPQVTEPVHRLTGMLHKYQHALTDS.

The next 11 membrane-spanning stretches (helical) occupy residues 13–33 (FAVKLATAIVLALFVGFHFQL), 38–58 (WAVLTAAIVAAGPAFAAGGEP), 69–89 (LRIIGTFIGCIAGLVIIIAMI), 93–113 (LLMILVCCIWAGFCTWISSLV), 121–141 (WGLAGYTALIIVITIQPEPLL), 152–172 (EIVIGIVCAIMADLLFSPRSI), 370–390 (LFWLWTGWTSGSGAMVMIAVV), 407–427 (FIYGTLAALPLGLLYFLVIIP), 431–451 (QSMLLLCISLAVLGFFLGIEV), 459–479 (MGALASTINIIVLDNPMTFHF), and 482–502 (FLDSALGQIVGCVLAFTVILL).

It belongs to the aromatic acid exporter ArAE (TC 2.A.85) family.

The protein localises to the cell inner membrane. Its function is as follows. Forms an efflux pump with AaeA. Could function as a metabolic relief valve, allowing to eliminate certain compounds when they accumulate to high levels in the cell. The protein is p-hydroxybenzoic acid efflux pump subunit AaeB of Escherichia coli O6:K15:H31 (strain 536 / UPEC).